Here is a 314-residue protein sequence, read N- to C-terminus: Olfactory receptor 5P6 (314 aa).

Residues 1–28 are Extracellular-facing; that stretch reads MAFQEDGNHTAVTEFVLFGLTDDPVLRV. Asparagine 8 is a glycosylation site (N-linked (GlcNAc...) asparagine). The chain crosses the membrane as a helical span at residues 29–49; that stretch reads ILFIIFLCIYLVTVSGNLSTI. The Cytoplasmic segment spans residues 50 to 57; sequence LLIRVSSQ. The helical transmembrane segment at 58 to 78 threads the bilayer; it reads LHHPMYFFLSHLAFADIGYSS. At 79–102 the chain is on the extracellular side; that stretch reads SVTPNMLVNFLVERHTISYIGCAI. A disulfide bridge connects residues cysteine 100 and cysteine 192. The helical transmembrane segment at 103–123 threads the bilayer; that stretch reads QLGSVVFFGSSECFILAAMAY. At 124-136 the chain is on the cytoplasmic side; the sequence is DRFMAICNPLLYS. A helical membrane pass occupies residues 137 to 157; it reads TKMSTQVCVQLLLIAYIGGFL. Residues 158 to 199 are Extracellular-facing; sequence NTWSFTICFYSLVFCGPNGVNHFFCDFAPLIELSCSDVSVPA. A helical transmembrane segment spans residues 200–220; that stretch reads TVPSFTAGSIIVVTVIVIAIS. The Cytoplasmic portion of the chain corresponds to 221-240; that stretch reads YIYILITILKMHSTEGRQKA. Residues 241 to 261 traverse the membrane as a helical segment; that stretch reads FSTCTSHLTAVTLFYGTITFI. Topologically, residues 262 to 274 are extracellular; sequence YVMPKSSFSTDQN. A helical transmembrane segment spans residues 275-295; sequence KVVSVFYMVVIPMLNPLIYSL. At 296–314 the chain is on the cytoplasmic side; sequence RNNEIKGALKRQIGRKIFS.

This sequence belongs to the G-protein coupled receptor 1 family.

The protein resides in the cell membrane. Potential odorant receptor. The polypeptide is Olfactory receptor 5P6 (Mus musculus (Mouse)).